Here is a 373-residue protein sequence, read N- to C-terminus: Queuine tRNA-ribosyltransferase accessory subunit 2 (373 aa).

Zn(2+) is bound by residues C320, C322, C325, and H351.

The protein belongs to the queuine tRNA-ribosyltransferase family. QTRT2 subfamily. As to quaternary structure, heterodimer of a catalytic subunit and an accessory subunit. Zn(2+) serves as cofactor.

It is found in the cytoplasm. Non-catalytic subunit of the queuine tRNA-ribosyltransferase (TGT) that catalyzes the base-exchange of a guanine (G) residue with queuine (Q) at position 34 (anticodon wobble position) in tRNAs with GU(N) anticodons (tRNA-Asp, -Asn, -His and -Tyr), resulting in the hypermodified nucleoside queuosine (7-(((4,5-cis-dihydroxy-2-cyclopenten-1-yl)amino)methyl)-7-deazaguanosine). This chain is Queuine tRNA-ribosyltransferase accessory subunit 2, found in Caenorhabditis elegans.